Here is a 435-residue protein sequence, read N- to C-terminus: Apparent malate synthase (435 aa).

The Mg(2+) site is built by glutamate 159 and asparagine 180. Residue glutamate 159 participates in substrate binding.

Belongs to the HpcH/HpaI aldolase family. The cofactor is Mg(2+). Requires Mn(2+) as cofactor. It depends on Co(2+) as a cofactor. Ca(2+) serves as cofactor.

It catalyses the reaction (S)-malyl-CoA = glyoxylate + acetyl-CoA. The catalysed reaction is (S)-malyl-CoA + H2O = (S)-malate + CoA + H(+). Its function is as follows. Involved in the methylaspartate cycle. Catalyzes the biosynthesis of malate in two steps. In the first reaction acetyl-CoA is condensed reversibly with glyoxylate to form (S)-malyl-CoA. In the second reaction (S)-malyl-CoA is hydrolyzed to malate and CoA. It can also catalyze the condensation of propionyl-CoA with glyoxylate and of acetyl-CoA with pyruvate, however the CoA-ester hydrolysis reaction is highly specific for (S)-malyl-CoA. In Haloarcula marismortui (strain ATCC 43049 / DSM 3752 / JCM 8966 / VKM B-1809) (Halobacterium marismortui), this protein is Apparent malate synthase (aceB).